Here is a 67-residue protein sequence, read N- to C-terminus: Large ribosomal subunit protein uL29 (67 aa).

The protein belongs to the universal ribosomal protein uL29 family.

The chain is Large ribosomal subunit protein uL29 from Acetivibrio thermocellus (strain ATCC 27405 / DSM 1237 / JCM 9322 / NBRC 103400 / NCIMB 10682 / NRRL B-4536 / VPI 7372) (Clostridium thermocellum).